A 231-amino-acid chain; its full sequence is Ribose-5-phosphate isomerase A (231 aa).

Residues 28–31 (TGST), 83–86 (DGAD), and 96–99 (KGGG) contribute to the substrate site. The active-site Proton acceptor is E105. K123 provides a ligand contact to substrate.

The protein belongs to the ribose 5-phosphate isomerase family. In terms of assembly, homodimer.

The enzyme catalyses aldehydo-D-ribose 5-phosphate = D-ribulose 5-phosphate. It functions in the pathway carbohydrate degradation; pentose phosphate pathway; D-ribose 5-phosphate from D-ribulose 5-phosphate (non-oxidative stage): step 1/1. Catalyzes the reversible conversion of ribose-5-phosphate to ribulose 5-phosphate. The sequence is that of Ribose-5-phosphate isomerase A from Parvibaculum lavamentivorans (strain DS-1 / DSM 13023 / NCIMB 13966).